The primary structure comprises 441 residues: 3-phosphoshikimate 1-carboxyvinyltransferase (441 aa).

3-phosphoshikimate is bound by residues Lys-25, Ser-26, and Arg-30. Lys-25 lines the phosphoenolpyruvate pocket. The phosphoenolpyruvate site is built by Gly-97 and Arg-125. Positions 169, 170, 311, and 338 each coordinate 3-phosphoshikimate. Residue Gln-170 coordinates phosphoenolpyruvate. Asp-311 serves as the catalytic Proton acceptor. Residues Arg-342, Arg-383, and Lys-410 each coordinate phosphoenolpyruvate.

It belongs to the EPSP synthase family. Monomer.

It is found in the cytoplasm. It carries out the reaction 3-phosphoshikimate + phosphoenolpyruvate = 5-O-(1-carboxyvinyl)-3-phosphoshikimate + phosphate. Its pathway is metabolic intermediate biosynthesis; chorismate biosynthesis; chorismate from D-erythrose 4-phosphate and phosphoenolpyruvate: step 6/7. In terms of biological role, catalyzes the transfer of the enolpyruvyl moiety of phosphoenolpyruvate (PEP) to the 5-hydroxyl of shikimate-3-phosphate (S3P) to produce enolpyruvyl shikimate-3-phosphate and inorganic phosphate. The protein is 3-phosphoshikimate 1-carboxyvinyltransferase of Chlamydia muridarum (strain MoPn / Nigg).